The sequence spans 171 residues: Ribosome-binding factor A (171 aa).

Residues A120 to P132 show a composition bias toward low complexity. Residues A120 to L171 are disordered. A compositionally biased stretch (basic and acidic residues) spans D133–T142. The span at D143–D160 shows a compositional bias: acidic residues. Low complexity predominate over residues A161–L171.

The protein belongs to the RbfA family. Monomer. Binds 30S ribosomal subunits, but not 50S ribosomal subunits or 70S ribosomes.

The protein localises to the cytoplasm. Functionally, one of several proteins that assist in the late maturation steps of the functional core of the 30S ribosomal subunit. Associates with free 30S ribosomal subunits (but not with 30S subunits that are part of 70S ribosomes or polysomes). Required for efficient processing of 16S rRNA. May interact with the 5'-terminal helix region of 16S rRNA. The polypeptide is Ribosome-binding factor A (Kineococcus radiotolerans (strain ATCC BAA-149 / DSM 14245 / SRS30216)).